A 533-amino-acid polypeptide reads, in one-letter code: WD repeat-containing protein JIP5 (533 aa).

5 WD repeats span residues 26–67 (NYSD…EKQS), 84–130 (GKVS…GSCR), 176–215 (NSND…GSKL), 264–309 (NQDD…FMDQ), and 372–409 (GAAD…EIAL). Composition is skewed to acidic residues over residues 408 to 428 (ALDE…EDDL) and 437 to 452 (ASDE…EDEK). Positions 408 to 533 (ALDESDDSDD…EHGIRRFDDL (126 aa)) are disordered. Composition is skewed to basic and acidic residues over residues 453–463 (EDKPVKIDHPL) and 521–533 (QKHE…FDDL).

This sequence belongs to the WD repeat WDR55 family.

It localises to the nucleus. Its subcellular location is the nucleolus. The protein is WD repeat-containing protein JIP5 (JIP5) of Scheffersomyces stipitis (strain ATCC 58785 / CBS 6054 / NBRC 10063 / NRRL Y-11545) (Yeast).